Here is a 331-residue protein sequence, read N- to C-terminus: Probable protein phosphatase 2C 1 (331 aa).

Positions 1-29 (MAASSTATRLSPPRLHAPTTPSPHLPLRR) are disordered. The 245-residue stretch at 48-292 (THLIPHPRKA…DDITVIVAQV (245 aa)) folds into the PPM-type phosphatase domain. Residues Asp-79, Gly-80, Asp-210, and Asp-283 each contribute to the Mn(2+) site. Positions 300–331 (DEGVDEEKGQGDEQGSAVAVASSEQKEDSITT) are disordered.

It belongs to the PP2C family. Mg(2+) is required as a cofactor. The cofactor is Mn(2+).

It catalyses the reaction O-phospho-L-seryl-[protein] + H2O = L-seryl-[protein] + phosphate. The enzyme catalyses O-phospho-L-threonyl-[protein] + H2O = L-threonyl-[protein] + phosphate. The polypeptide is Probable protein phosphatase 2C 1 (Oryza sativa subsp. japonica (Rice)).